The primary structure comprises 61 residues: Small ribosomal subunit protein uS14 (61 aa).

Positions 24, 27, 40, and 43 each coordinate Zn(2+).

Belongs to the universal ribosomal protein uS14 family. Zinc-binding uS14 subfamily. As to quaternary structure, part of the 30S ribosomal subunit. Contacts proteins S3 and S10. The cofactor is Zn(2+).

Functionally, binds 16S rRNA, required for the assembly of 30S particles and may also be responsible for determining the conformation of the 16S rRNA at the A site. The sequence is that of Small ribosomal subunit protein uS14 from Acetivibrio thermocellus (strain ATCC 27405 / DSM 1237 / JCM 9322 / NBRC 103400 / NCIMB 10682 / NRRL B-4536 / VPI 7372) (Clostridium thermocellum).